The primary structure comprises 134 residues: Profilin-2 (134 aa).

A disulfide bridge connects residues Cys13 and Cys118. An Involved in PIP2 interaction motif is present at residues 84 to 100; that stretch reads AVIRGKKGSGGITIKKT. Position 114 is a phosphothreonine (Thr114).

Belongs to the profilin family. In terms of assembly, occurs in many kinds of cells as a complex with monomeric actin in a 1:1 ratio. Phosphorylated by MAP kinases.

The protein resides in the cytoplasm. It is found in the cytoskeleton. Its function is as follows. Binds to actin and affects the structure of the cytoskeleton. At high concentrations, profilin prevents the polymerization of actin, whereas it enhances it at low concentrations. The polypeptide is Profilin-2 (Olea europaea (Common olive)).